The following is a 497-amino-acid chain: Zinc metalloproteinase nas-28 (497 aa).

Positions 1–14 are cleaved as a signal peptide; the sequence is MFFPVVFFIPFVLG. A propeptide spanning residues 15–120 is cleaved from the precursor; it reads APTQKALEKI…IENGNYRSKR (106 aa). N-linked (GlcNAc...) asparagine glycosylation occurs at Asn76. One can recognise a Peptidase M12A domain in the interval 121 to 319; sequence QAIVDTTNFW…IGVNKLYNCT (199 aa). 7 cysteine pairs are disulfide-bonded: Cys164-Cys318, Cys185-Cys206, Cys328-Cys339, Cys331-Cys342, Cys344-Cys353, Cys364-Cys398, and Cys427-Cys447. His214 contacts Zn(2+). Residue Glu215 is part of the active site. Zn(2+) contacts are provided by His218 and His224. An N-linked (GlcNAc...) asparagine glycan is attached at Asn317. The EGF-like domain maps to 324–354; sequence IQMKCSNCGITDSRNCNQCKCPRYFTGASCD. One can recognise a CUB domain in the interval 364–483; the sequence is CNGAVLQATS…LTFSIQYRAV (120 aa). N-linked (GlcNAc...) asparagine glycosylation is present at Asn394.

It depends on Zn(2+) as a cofactor.

It is found in the secreted. Functionally, metalloprotease. This Caenorhabditis elegans protein is Zinc metalloproteinase nas-28 (nas-28).